The chain runs to 154 residues: 6,7-dimethyl-8-ribityllumazine synthase (154 aa).

5-amino-6-(D-ribitylamino)uracil-binding positions include Phe23, Ala57 to Glu59, and Ala81 to Ile83. Gly86–Thr87 contacts (2S)-2-hydroxy-3-oxobutyl phosphate. The active-site Proton donor is His89. 5-amino-6-(D-ribitylamino)uracil is bound at residue Phe114. Arg128 contacts (2S)-2-hydroxy-3-oxobutyl phosphate.

It belongs to the DMRL synthase family. Forms an icosahedral capsid composed of 60 subunits, arranged as a dodecamer of pentamers.

The enzyme catalyses (2S)-2-hydroxy-3-oxobutyl phosphate + 5-amino-6-(D-ribitylamino)uracil = 6,7-dimethyl-8-(1-D-ribityl)lumazine + phosphate + 2 H2O + H(+). It functions in the pathway cofactor biosynthesis; riboflavin biosynthesis; riboflavin from 2-hydroxy-3-oxobutyl phosphate and 5-amino-6-(D-ribitylamino)uracil: step 1/2. In terms of biological role, catalyzes the formation of 6,7-dimethyl-8-ribityllumazine by condensation of 5-amino-6-(D-ribitylamino)uracil with 3,4-dihydroxy-2-butanone 4-phosphate. This is the penultimate step in the biosynthesis of riboflavin. This Acidithiobacillus ferrooxidans (strain ATCC 23270 / DSM 14882 / CIP 104768 / NCIMB 8455) (Ferrobacillus ferrooxidans (strain ATCC 23270)) protein is 6,7-dimethyl-8-ribityllumazine synthase.